A 472-amino-acid polypeptide reads, in one-letter code: FAD-dependent monooxygenase ltmM (472 aa).

A helical transmembrane segment spans residues 7–27; sequence VIIVGGSVAGLSLAHCLEKIG. Positions 34, 48, and 107 each coordinate FAD. A glycan (N-linked (GlcNAc...) asparagine) is linked at N186. FAD is bound by residues D306 and A319. A helical membrane pass occupies residues 450 to 470; that stretch reads IVYALYLVAAAAFILYCLSSL.

It belongs to the paxM FAD-dependent monooxygenase family. FAD serves as cofactor.

The protein localises to the membrane. The protein operates within secondary metabolite biosynthesis. Its function is as follows. FAD-dependent monooxygenase; part of the gene cluster that mediates the biosynthesis of lolitrems, indole-diterpene mycotoxins that are potent tremorgens in mammals, and are synthesized by clavicipitaceous fungal endophytes in association with their grass hosts. The geranylgeranyl diphosphate (GGPP) synthase ltmG is proposed to catalyze the first step in lolitremB biosynthesis. LtmG catalyzes a series of iterative condensations of isopentenyl diphosphate (IPP) with dimethylallyl diphosphate (DMAPP), geranyl diphosphate (GPP), and farnesyl diphosphate (FPP), to form GGPP. GGPP then condenses with indole-3-glycerol phosphate to form 3-geranylgeranylindole, an acyclic intermediate, to be incorporated into paxilline. Either ltmG or ltmC could be responsible for this step, as both are putative prenyl transferases. The FAD-dependent monooxygenase ltmM then catalyzes the epoxidation of the two terminal alkenes of the geranylgeranyl moiety, which is subsequently cyclized by ltmB, to paspaline. The cytochrome P450 monooxygenases ltmQ and ltmP can sequentially oxidize paspaline to terpendole E and terpendole F. Alternatively, ltmP converts paspaline to an intermediate which is oxidized by ltmQ to terpendole F. LtmF, ltmK, ltmE and ltmJ appear to be unique to the epichloe endophytes. The prenyltransferase ltmF is involved in the 27-hydroxyl-O-prenylation. The cytochrome P450 monooxygenase ltmK is required for the oxidative acetal ring formation. The multi-functional prenyltransferase ltmE is required for C20- and C21-prenylations of the indole ring of paspalanes and acts together with the cytochrome P450 monooxygenase ltmJ to yield lolitremanes by multiple oxidations and ring closures. The stereoisomer pairs of lolitriol and lolitrem N or lolitrem B and lolitrem F may be attributed to variations in the way in which ring closure can occur under the action of ltmJ. While the major product of this pathway is lolitrem B, the prenyl transferases and cytochrome P450 monooxygenases identified in this pathway have a remarkable versatility in their regio- and stereo-specificities to generate a diverse range of metabolites that are products of a metabolic grid rather than a linear pathway. The polypeptide is FAD-dependent monooxygenase ltmM (ltmM) (Epichloe festucae var. lolii (Neotyphodium lolii)).